The primary structure comprises 246 residues: Probable transcriptional regulatory protein HSM_1763 (246 aa).

Belongs to the TACO1 family.

It is found in the cytoplasm. The protein is Probable transcriptional regulatory protein HSM_1763 of Histophilus somni (strain 2336) (Haemophilus somnus).